The sequence spans 251 residues: MNAVILIPARLDSSRLPRKMLADLEGEPLIVRTWRQALRSNLASRVVVAADSPEIAAVLEPLGAEVVLTSPTASCGTERIAEAARSIEADVFLNLQGDEPLISPENIDLALQPFFDAPAGSALPDCTTLVFPLGPDDRTQIDDPHVVKVVMDGEGNALYFSRSPIPYVRNSSPSLRLYRHVGLYAFTAEVLQRFAAMPVSMLEEAESLEQLRLLESGFRIRCVNTAVDNPGVNTPEDLELVRSLLRRASRA.

Belongs to the KdsB family.

The protein resides in the cytoplasm. It carries out the reaction 3-deoxy-alpha-D-manno-oct-2-ulosonate + CTP = CMP-3-deoxy-beta-D-manno-octulosonate + diphosphate. It participates in nucleotide-sugar biosynthesis; CMP-3-deoxy-D-manno-octulosonate biosynthesis; CMP-3-deoxy-D-manno-octulosonate from 3-deoxy-D-manno-octulosonate and CTP: step 1/1. It functions in the pathway bacterial outer membrane biogenesis; lipopolysaccharide biosynthesis. Its function is as follows. Activates KDO (a required 8-carbon sugar) for incorporation into bacterial lipopolysaccharide in Gram-negative bacteria. This chain is 3-deoxy-manno-octulosonate cytidylyltransferase, found in Chlorobium luteolum (strain DSM 273 / BCRC 81028 / 2530) (Pelodictyon luteolum).